Here is a 486-residue protein sequence, read N- to C-terminus: UDP-N-acetylmuramate--L-alanine ligase (486 aa).

Residue 129–135 coordinates ATP; that stretch reads GTHGKTT.

The protein belongs to the MurCDEF family.

The protein localises to the cytoplasm. It carries out the reaction UDP-N-acetyl-alpha-D-muramate + L-alanine + ATP = UDP-N-acetyl-alpha-D-muramoyl-L-alanine + ADP + phosphate + H(+). The protein operates within cell wall biogenesis; peptidoglycan biosynthesis. Cell wall formation. The protein is UDP-N-acetylmuramate--L-alanine ligase of Vibrio cholerae serotype O1 (strain ATCC 39315 / El Tor Inaba N16961).